The following is a 264-amino-acid chain: Tryptophan synthase alpha chain (264 aa).

Residues Glu-49 and Asp-60 each act as proton acceptor in the active site.

Belongs to the TrpA family. Tetramer of two alpha and two beta chains.

The catalysed reaction is (1S,2R)-1-C-(indol-3-yl)glycerol 3-phosphate + L-serine = D-glyceraldehyde 3-phosphate + L-tryptophan + H2O. The protein operates within amino-acid biosynthesis; L-tryptophan biosynthesis; L-tryptophan from chorismate: step 5/5. Functionally, the alpha subunit is responsible for the aldol cleavage of indoleglycerol phosphate to indole and glyceraldehyde 3-phosphate. This is Tryptophan synthase alpha chain from Laribacter hongkongensis (strain HLHK9).